Here is a 358-residue protein sequence, read N- to C-terminus: Carbohydrate sulfotransferase 10 (358 aa).

At 1–6 (MHHQWL) the chain is on the cytoplasmic side. Residues 7–27 (LLAACFWVIFMFMVASKFITL) form a helical; Signal-anchor for type II membrane protein membrane-spanning segment. The Lumenal segment spans residues 28–358 (TFKDPDGYGA…GYRVPDFLLN (331 aa)). Asparagine 101 is a glycosylation site (N-linked (GlcNAc...) asparagine). Residues 129-135 (PKVGNTQ) and 191-199 (RDPFERLIS) contribute to the 3'-phosphoadenylyl sulfate site. N-linked (GlcNAc...) asparagine glycosylation is present at asparagine 318.

Belongs to the sulfotransferase 2 family. In terms of tissue distribution, predominantly expressed in hypertrophic, prehypertrophic and proliferative chondrocytes at E12 but is down-regulated in epiphyseal chondrocytes.

Its subcellular location is the golgi apparatus membrane. Its function is as follows. Catalyzes the transfer of sulfate to position 3 of terminal glucuronic acid of both protein- and lipid-linked oligosaccharides. Participates in biosynthesis of HNK-1 carbohydrate structure, a sulfated glucuronyl-lactosaminyl residue carried by many neural recognition molecules, which is involved in cell interactions during ontogenetic development and in synaptic plasticity in the adult. In Gallus gallus (Chicken), this protein is Carbohydrate sulfotransferase 10 (CHST10).